The following is a 68-amino-acid chain: Large ribosomal subunit protein bL32 (68 aa).

Belongs to the bacterial ribosomal protein bL32 family.

The sequence is that of Large ribosomal subunit protein bL32 from Cereibacter sphaeroides (strain ATCC 17025 / ATH 2.4.3) (Rhodobacter sphaeroides).